Consider the following 210-residue polypeptide: MLQLGLRVLGCKASSVLRASTCLAGRAGRKEAGWECGGARSFSSSAVTMAPIKVGDAIPSVEVFEGEPGKKVNLAELFKGKKGVLFGVPGAFTPGCSKTHLPGFVEQAGALKAKGAQVVACLSVNDVFVIEEWGRAHQAEGKVRLLADPTGAFGKATDLLLDDSLVSLFGNRRLKRFSMVIDNGIVKALNVEPDGTGLTCSLAPNILSQL.

A mitochondrion-targeting transit peptide spans 1-48 (MLQLGLRVLGCKASSVLRASTCLAGRAGRKEAGWECGGARSFSSSAVT). Positions 52 to 210 (IKVGDAIPSV…SLAPNILSQL (159 aa)) constitute a Thioredoxin domain. The residue at position 70 (K70) is an N6-acetyllysine; alternate. Position 70 is an N6-succinyllysine; alternate (K70). K71 carries the post-translational modification N6-acetyllysine. The residue at position 79 (K79) is an N6-acetyllysine; alternate. Residue K79 is modified to N6-succinyllysine; alternate. The Cysteine sulfenic acid (-SOH) intermediate role is filled by C96. A lipid anchor (S-palmitoyl cysteine) is attached at C96. C96 and C200 are disulfide-bonded. An N6-succinyllysine modification is found at K112. 2 positions are modified to phosphoserine: S167 and S178. The Microbody targeting signal motif lies at 208–210 (SQL).

It belongs to the peroxiredoxin family. Prx5 subfamily. As to quaternary structure, monomer. Post-translationally, S-palmitoylated. Palmitoylation occurs on the active site, inhibiting its reactivity; therefore PRDX5 palmitoylation status determines its antioxidant capacity. In terms of processing, S-palmitoylated. Depalmitoylated by ABHD10. Widely expressed.

The protein localises to the mitochondrion. It is found in the cytoplasm. It localises to the peroxisome matrix. It carries out the reaction a hydroperoxide + [thioredoxin]-dithiol = an alcohol + [thioredoxin]-disulfide + H2O. Functionally, thiol-specific peroxidase that catalyzes the reduction of hydrogen peroxide and organic hydroperoxides to water and alcohols, respectively. Plays a role in cell protection against oxidative stress by detoxifying peroxides and as sensor of hydrogen peroxide-mediated signaling events. In Mus musculus (Mouse), this protein is Peroxiredoxin-5, mitochondrial.